Reading from the N-terminus, the 1262-residue chain is Ras-specific guanine nucleotide-releasing factor 1 (1262 aa).

Positions D22–Y130 constitute a PH 1 domain. Phosphoserine; by PLK2 is present on S71. Positions K208–Y233 constitute an IQ domain. Positions K244–E430 constitute a DH domain. The 129-residue stretch at T460–D588 folds into the PH 2 domain. 2 positions are modified to phosphoserine; by PLK2: S581 and S617. The 115-residue stretch at K635–P749 folds into the N-terminal Ras-GEF domain. The tract at residues D714 to P738 is disordered. S745 bears the Phosphoserine mark. Residue S766 is modified to Phosphoserine; by PLK2. The tract at residues E800 to K854 is disordered. The segment covering H821–E839 has biased composition (basic and acidic residues). The 233-residue stretch at P1027–K1259 folds into the Ras-GEF domain.

As to quaternary structure, homooligomer and heterooligomer with RASGRF2. Interacts with USP8, thereby regulating its stability. In terms of processing, phosphorylated by PLK2, leading to ubiquitination and degradation by the proteasome. Post-translationally, ubiquitinated and degraded following phosphorylation by PLK2. Phosphorylated by SRC and LCK. Phosphorylation by LCK increases its capacity to stimulate the GDP/GTP exchange on Ras, whereas its phosphorylation by SRC seems not to have an effect on stimulation activity. As to expression, brain.

Its function is as follows. Promotes the exchange of Ras-bound GDP by GTP. In Mus musculus (Mouse), this protein is Ras-specific guanine nucleotide-releasing factor 1 (Rasgrf1).